Consider the following 311-residue polypeptide: Pyrimidine-specific ribonucleoside hydrolase RihA (311 aa).

Residue H240 is part of the active site.

It belongs to the IUNH family. RihA subfamily.

Hydrolyzes with equal efficiency cytidine or uridine to ribose and cytosine or uracil, respectively. This is Pyrimidine-specific ribonucleoside hydrolase RihA from Escherichia coli O45:K1 (strain S88 / ExPEC).